The following is a 2060-amino-acid chain: Unconventional myosin-X (2060 aa).

Methionine 1 bears the N-acetylmethionine mark. The region spanning 63–739 (EGVDDMASLT…LEQKLEKRRE (677 aa)) is the Myosin motor domain. ATP contacts are provided by residues asparagine 104, tyrosine 113, 160–165 (GAGKTE), and asparagine 215. The actin-binding stretch occupies residues 619–641 (LHSLMATLSSSNPFFVRCIKPNT). 3 IQ domains span residues 742-771 (IDRAAMVIRAHILGYLARKQYRKVLCGVVT), 765-794 (VLCGVVTIQKNYRAFLARKRFLHLKKAAIV), and 788-817 (LKKAAIVFQKQLRGRLARKVYRQLLAEKRE). An SAH region spans residues 814–882 (EKRELEERKR…LTRELEKQRE (69 aa)). The stretch at 883–933 (NKQVEEILRLEKEIEDLQRMKEQQELSLTEASLQKLQQLRDEELRRLEDEA) forms a coiled coil. Phosphoserine occurs at positions 961, 964, and 967. Disordered stretches follow at residues 971-1039 (SELA…PYMN) and 1064-1088 (SLHNSSSGESTYCMPQNNGDLPSPD). The segment covering 991 to 1005 (PEEEVDEGFEADDDA) has biased composition (acidic residues). Positions 1064–1083 (SLHNSSSGESTYCMPQNNGD) are enriched in polar residues. The residue at position 1160 (threonine 1160) is a Phosphothreonine. 2 consecutive PH domains span residues 1214–1312 (EALK…QVHS) and 1394–1499 (EFIV…NVTD). Positions 1549-1697 (LPYGDINLNL…PSRDEIEALI (149 aa)) constitute a MyTH4 domain. The FERM domain maps to 1702-2046 (MTSTVYCHGG…AYISMIVKKR (345 aa)).

Belongs to the TRAFAC class myosin-kinesin ATPase superfamily. Myosin family. In terms of assembly, monomer, when in an inactive conformation in the cytosol. Homodimer in its active, membrane-bound conformation; antiparallel coiled coil-mediated dimer formation. Interacts with ECPAS. Interacts with DCC and ITGB5; the presence of DCC inhibits ITGB5 binding. Interacts with tubulin; ITGB5 or DCC binding inhibits tubulin binding. Interacts strongly with CALM3 and weakly with CALM, the CALM3 interaction is essential for function in filopodial extension and motility. Interacts with ITGB1, ITGB3 and ITGB5. Interacts with NEO1. Interacts with VASP.

It is found in the cytoplasm. The protein resides in the cytosol. It localises to the cell projection. Its subcellular location is the lamellipodium. The protein localises to the ruffle. It is found in the cytoskeleton. The protein resides in the filopodium tip. It localises to the cell cortex. Its subcellular location is the filopodium membrane. The protein localises to the cell membrane. Myosins are actin-based motor molecules with ATPase activity. Unconventional myosins serve in intracellular movements. MYO10 binds to actin filaments and actin bundles and functions as a plus end-directed motor. Moves with higher velocity and takes larger steps on actin bundles than on single actin filaments. The tail domain binds to membranous compartments containing phosphatidylinositol 3,4,5-trisphosphate or integrins, and mediates cargo transport along actin filaments. Regulates cell shape, cell spreading and cell adhesion. Stimulates the formation and elongation of filopodia. In hippocampal neurons it induces the formation of dendritic filopodia by trafficking the actin-remodeling protein VASP to the tips of filopodia, where it promotes actin elongation. Plays a role in formation of the podosome belt in osteoclasts. This is Unconventional myosin-X (Myo10) from Rattus norvegicus (Rat).